The chain runs to 158 residues: Small ribosomal subunit protein uS7 (158 aa).

The protein belongs to the universal ribosomal protein uS7 family. In terms of assembly, part of the 30S ribosomal subunit. Contacts proteins S9 and S11.

In terms of biological role, one of the primary rRNA binding proteins, it binds directly to 16S rRNA where it nucleates assembly of the head domain of the 30S subunit. Is located at the subunit interface close to the decoding center, probably blocks exit of the E-site tRNA. The chain is Small ribosomal subunit protein uS7 from Porphyromonas gingivalis (strain ATCC 33277 / DSM 20709 / CIP 103683 / JCM 12257 / NCTC 11834 / 2561).